Reading from the N-terminus, the 465-residue chain is GTPase Der (465 aa).

2 consecutive EngA-type G domains span residues 3–166 (FLVA…LNEF) and 184–358 (IHFS…ACAN). Residues 9 to 16 (GRANVGKS), 56 to 60 (DTGGI), 118 to 121 (NKVD), 190 to 197 (GRPNVGKS), 237 to 241 (DTAGV), and 302 to 305 (NKWD) contribute to the GTP site. In terms of domain architecture, KH-like spans 359–443 (KKITTADATR…PIVFEFKQSE (85 aa)).

It belongs to the TRAFAC class TrmE-Era-EngA-EngB-Septin-like GTPase superfamily. EngA (Der) GTPase family. In terms of assembly, associates with the 50S ribosomal subunit.

Functionally, GTPase that plays an essential role in the late steps of ribosome biogenesis. In Francisella philomiragia subsp. philomiragia (strain ATCC 25017 / CCUG 19701 / FSC 153 / O#319-036), this protein is GTPase Der.